The chain runs to 129 residues: MAKEAKRVRRSERKNISSSVVHINSTFNNTMITITDSQGDTIAWSSAGAQGFKGSRKSTPFAAQVAAADCAKKAEEHGVRSLEVEVCGPGSGRESALRALQSAGFIITSIRDVTPIPHNGCRPRKRRRV.

This sequence belongs to the universal ribosomal protein uS11 family. In terms of assembly, part of the 30S ribosomal subunit. Interacts with proteins S7 and S18. Binds to IF-3.

In terms of biological role, located on the platform of the 30S subunit, it bridges several disparate RNA helices of the 16S rRNA. Forms part of the Shine-Dalgarno cleft in the 70S ribosome. The protein is Small ribosomal subunit protein uS11 of Bartonella bacilliformis (strain ATCC 35685 / KC583 / Herrer 020/F12,63).